The primary structure comprises 884 residues: Kinesin-like protein KIN-7C (884 aa).

One can recognise a Kinesin motor domain in the interval 33-355 (RIQVLVRLRP…LLFGSCAKEV (323 aa)). 119–126 (GQTSSGKT) provides a ligand contact to ATP. Positions 364 to 435 (VMSDKALVKH…LQDLLQSVGD (72 aa)) form a coiled coil. A disordered region spans residues 434–530 (GDHDLNRQVQ…VNSRHSRPSG (97 aa)). A compositionally biased stretch (low complexity) spans 449 to 460 (RSPPSVGMPPSV). Basic and acidic residues predominate over residues 461–483 (SRDDSSQVSHDDSDLYKEVRCIE). The span at 498 to 523 (GESSSPQDSNMNSGLHGNDSNASVNS) shows a compositional bias: polar residues.

The protein belongs to the TRAFAC class myosin-kinesin ATPase superfamily. Kinesin family. KIN-7 subfamily.

This is Kinesin-like protein KIN-7C from Oryza sativa subsp. japonica (Rice).